A 118-amino-acid chain; its full sequence is MASQSQGIQQLLQAEKRAAEKVADARKRKARRLKQAKEEAQMEVEQYRREREHEFQSKQQAAMGSQGNLSAEVEQATRHQVQGMQSSQQRNRERVLAQLLGMVCDVRPQVHPNYRISA.

Ala-2 carries the N-acetylalanine modification. The interval 25–90 is disordered; it reads ARKRKARRLK…VQGMQSSQQR (66 aa). Basic and acidic residues predominate over residues 35 to 56; the sequence is QAKEEAQMEVEQYRREREHEFQ. Polar residues-rich tracts occupy residues 57 to 69 and 78 to 89; these read SKQQ…QGNL and RHQVQGMQSSQQ.

The protein belongs to the V-ATPase G subunit family. As to quaternary structure, V-ATPase is a heteromultimeric enzyme made up of two complexes: the ATP-hydrolytic V1 complex and the proton translocation V0 complex. The V1 complex consists of three catalytic AB heterodimers that form a heterohexamer, three peripheral stalks each consisting of EG heterodimers, one central rotor including subunits D and F, and the regulatory subunits C and H. The proton translocation complex V0 consists of the proton transport subunit a, a ring of proteolipid subunits c9c'', rotary subunit d, subunits e and f, and the accessory subunits ATP6AP1/Ac45 and ATP6AP2/PRR.

The protein resides in the apical cell membrane. Its function is as follows. Subunit of the V1 complex of vacuolar(H+)-ATPase (V-ATPase), a multisubunit enzyme composed of a peripheral complex (V1) that hydrolyzes ATP and a membrane integral complex (V0) that translocates protons. V-ATPase is responsible for acidifying and maintaining the pH of intracellular compartments and in some cell types, is targeted to the plasma membrane, where it is responsible for acidifying the extracellular environment. In aerobic conditions, involved in intracellular iron homeostasis, thus triggering the activity of Fe(2+) prolyl hydroxylase (PHD) enzymes, and leading to HIF1A hydroxylation and subsequent proteasomal degradation. This chain is V-type proton ATPase subunit G 1 (ATP6V1G1), found in Pan troglodytes (Chimpanzee).